We begin with the raw amino-acid sequence, 144 residues long: Large ribosomal subunit protein uL15 (144 aa).

The segment at 1–57 is disordered; it reads MELNNIKPADGAKKDKRRVGRGIGSGLGKTAGRGHKGQKSRAGGFHKVGFEGGQMPM. The segment covering 21-31 has biased composition (gly residues); that stretch reads RGIGSGLGKTA.

This sequence belongs to the universal ribosomal protein uL15 family. In terms of assembly, part of the 50S ribosomal subunit.

Its function is as follows. Binds to the 23S rRNA. This is Large ribosomal subunit protein uL15 from Thiobacillus denitrificans (strain ATCC 25259 / T1).